Reading from the N-terminus, the 396-residue chain is Tryptophan synthase beta chain (396 aa).

At Lys-88 the chain carries N6-(pyridoxal phosphate)lysine.

This sequence belongs to the TrpB family. In terms of assembly, tetramer of two alpha and two beta chains. The cofactor is pyridoxal 5'-phosphate.

It carries out the reaction (1S,2R)-1-C-(indol-3-yl)glycerol 3-phosphate + L-serine = D-glyceraldehyde 3-phosphate + L-tryptophan + H2O. It participates in amino-acid biosynthesis; L-tryptophan biosynthesis; L-tryptophan from chorismate: step 5/5. In terms of biological role, the beta subunit is responsible for the synthesis of L-tryptophan from indole and L-serine. In Leptospira biflexa serovar Patoc (strain Patoc 1 / Ames), this protein is Tryptophan synthase beta chain.